We begin with the raw amino-acid sequence, 116 residues long: NADH-ubiquinone oxidoreductase chain 3 (116 aa).

The next 3 helical transmembrane spans lie at 4-24 (IIFL…AAHA), 56-76 (FFLV…LFPL), and 88-108 (LIPI…FEWI).

It belongs to the complex I subunit 3 family.

Its subcellular location is the mitochondrion membrane. It catalyses the reaction a ubiquinone + NADH + 5 H(+)(in) = a ubiquinol + NAD(+) + 4 H(+)(out). Functionally, core subunit of the mitochondrial membrane respiratory chain NADH dehydrogenase (Complex I) that is believed to belong to the minimal assembly required for catalysis. Complex I functions in the transfer of electrons from NADH to the respiratory chain. The immediate electron acceptor for the enzyme is believed to be ubiquinone. The protein is NADH-ubiquinone oxidoreductase chain 3 (ND3) of Strongylocentrotus purpuratus (Purple sea urchin).